A 598-amino-acid chain; its full sequence is MNELIKHKLELLPDSPGCYLHKDKEGTIIYVGKAKNLKKRVRSYFRGSHDTKTELLVSEIVDFEYIVTESDTEALLLEINLIQKNMPKYNIKLKDDKSYPFLKITNESFPRLVITRYIKKNDGLYFGPYPDSYTANEVKKLLDRIFPFKKCKNPINKVCFYYHLGQCCAHTICHTDKAYWDRLIDDVKHFLNGKDDKIIEDLRSKMLAASEEMAFERAAEYRDLISGIATMRTKQRVMSKDLQDRDIFGYYVDKGWMCVQVFFVRQGKLIQRDVNLFPYYNDAEEDFLTYMGQFYQDKQHFIPKEVFIPEAIDEELVAAIVPTKIIKPKRGEKKQLVALATKNARVSLQQKFDLLEKDIKKTSGAIENLGQLLRIDKPVRIEAFDNSNIQGTSPVAAMVVFVDGKPSKKDYRKFKIKTVVGPDDYASMREVLFRRYSRVKKEGLQAPNLIIVDGGVGQVNVAKDVIEKQLGLTIPVAGLQKNDKHQTHDLLFGNPLEVVPLPRRSEEFFLLHRIQDEVHRFAVTFHRQVRRKNSFSSTLDHISGLGPKRKQLLLRHFKTITAIASATSEEIQALGIPKTVVEAIQQQITDNKNDRSSP.

Positions 14–91 (DSPGCYLHKD…IQKNMPKYNI (78 aa)) constitute a GIY-YIG domain. Residues 196 to 231 (DKIIEDLRSKMLAASEEMAFERAAEYRDLISGIATM) enclose the UVR domain.

The protein belongs to the UvrC family. As to quaternary structure, interacts with UvrB in an incision complex.

Its subcellular location is the cytoplasm. The UvrABC repair system catalyzes the recognition and processing of DNA lesions. UvrC both incises the 5' and 3' sides of the lesion. The N-terminal half is responsible for the 3' incision and the C-terminal half is responsible for the 5' incision. The chain is UvrABC system protein C from Streptococcus pyogenes serotype M12 (strain MGAS2096).